The sequence spans 967 residues: Vitamin B12-dependent ribonucleotide reductase (967 aa).

The tract at residues 1–23 (MTETASGPARSSRAKGTKAGKGL) is disordered. Substrate-binding positions include serine 143, 159–160 (AC), glycine 188, 364–368 (NPCSE), and 554–558 (PTGTI). Cysteine 160 and cysteine 377 are joined by a disulfide. Asparagine 364 (proton acceptor) is an active-site residue. Residue cysteine 366 is the Cysteine radical intermediate of the active site. Glutamate 368 acts as the Proton acceptor in catalysis.

This sequence belongs to the ribonucleoside diphosphate reductase class-2 family. Adenosylcob(III)alamin is required as a cofactor.

It catalyses the reaction a 2'-deoxyribonucleoside 5'-diphosphate + [thioredoxin]-disulfide + H2O = a ribonucleoside 5'-diphosphate + [thioredoxin]-dithiol. Functionally, catalyzes the reduction of ribonucleotides to deoxyribonucleotides. May function to provide a pool of deoxyribonucleotide precursors for DNA repair during oxygen limitation and/or for immediate growth after restoration of oxygen. This is Vitamin B12-dependent ribonucleotide reductase (nrdJ) from Streptomyces coelicolor (strain ATCC BAA-471 / A3(2) / M145).